We begin with the raw amino-acid sequence, 81 residues long: Cell division protein ZapB (81 aa).

Residues 6 to 80 (EVFEKLEAKV…LQALLGRMEE (75 aa)) adopt a coiled-coil conformation. Residues 38 to 47 (SLAQDVQSAQ) show a composition bias toward polar residues. Positions 38–67 (SLAQDVQSAQHQREELERENNHLKEQQSGW) are disordered. Residues 48–62 (HQREELERENNHLKE) are compositionally biased toward basic and acidic residues.

Belongs to the ZapB family. In terms of assembly, homodimer. The ends of the coiled-coil dimer bind to each other, forming polymers. Interacts with FtsZ.

It is found in the cytoplasm. Non-essential, abundant cell division factor that is required for proper Z-ring formation. It is recruited early to the divisome by direct interaction with FtsZ, stimulating Z-ring assembly and thereby promoting cell division earlier in the cell cycle. Its recruitment to the Z-ring requires functional FtsA or ZipA. The protein is Cell division protein ZapB of Citrobacter koseri (strain ATCC BAA-895 / CDC 4225-83 / SGSC4696).